A 172-amino-acid chain; its full sequence is Trypsin inhibitor 1B (172 aa).

2 cysteine pairs are disulfide-bonded: cysteine 40–cysteine 84 and cysteine 133–cysteine 139.

This sequence belongs to the protease inhibitor I3 (leguminous Kunitz-type inhibitor) family.

Functionally, WTI-1B inhibits trypsin stoichiometrically. This is Trypsin inhibitor 1B from Psophocarpus tetragonolobus (Winged bean).